Consider the following 281-residue polypeptide: Energy-coupling factor transporter ATP-binding protein EcfA1 (281 aa).

In terms of domain architecture, ABC transporter spans 7–242; that stretch reads IAAEDITFRY…NQDLIKIGLD (236 aa). ATP is bound at residue 42-49; that stretch reads GHNGSGKS.

It belongs to the ABC transporter superfamily. Energy-coupling factor EcfA family. Forms a stable energy-coupling factor (ECF) transporter complex composed of 2 membrane-embedded substrate-binding proteins (S component), 2 ATP-binding proteins (A component) and 2 transmembrane proteins (T component).

The protein resides in the cell membrane. Its function is as follows. ATP-binding (A) component of a common energy-coupling factor (ECF) ABC-transporter complex. Unlike classic ABC transporters this ECF transporter provides the energy necessary to transport a number of different substrates. This is Energy-coupling factor transporter ATP-binding protein EcfA1 from Bacillus licheniformis (strain ATCC 14580 / DSM 13 / JCM 2505 / CCUG 7422 / NBRC 12200 / NCIMB 9375 / NCTC 10341 / NRRL NRS-1264 / Gibson 46).